The sequence spans 254 residues: 3-deoxy-manno-octulosonate cytidylyltransferase (254 aa).

It belongs to the KdsB family.

The protein localises to the cytoplasm. It carries out the reaction 3-deoxy-alpha-D-manno-oct-2-ulosonate + CTP = CMP-3-deoxy-beta-D-manno-octulosonate + diphosphate. The protein operates within nucleotide-sugar biosynthesis; CMP-3-deoxy-D-manno-octulosonate biosynthesis; CMP-3-deoxy-D-manno-octulosonate from 3-deoxy-D-manno-octulosonate and CTP: step 1/1. It participates in bacterial outer membrane biogenesis; lipopolysaccharide biosynthesis. Activates KDO (a required 8-carbon sugar) for incorporation into bacterial lipopolysaccharide in Gram-negative bacteria. The polypeptide is 3-deoxy-manno-octulosonate cytidylyltransferase (Pseudomonas paraeruginosa (strain DSM 24068 / PA7) (Pseudomonas aeruginosa (strain PA7))).